We begin with the raw amino-acid sequence, 104 residues long: Evasin P1174 (104 aa).

A signal peptide spans 1–27; it reads LKTFCLFLQIAVFIALGIQIFLCGTDA. 3 cysteine pairs are disulfide-bonded: Cys40/Cys59, Cys44/Cys61, and Cys55/Cys72. 3 N-linked (GlcNAc...) asparagine glycosylation sites follow: Asn43, Asn49, and Asn58. Positions 85 to 104 are disordered; that stretch reads KPTSEEIADASPRPKETNSH.

The protein resides in the secreted. In terms of biological role, salivary chemokine-binding protein which binds to host chemokines CXCL1 and CXCL8. The sequence is that of Evasin P1174 from Ixodes ricinus (Common tick).